The following is a 143-amino-acid chain: Transcription antitermination protein NusB (143 aa).

This sequence belongs to the NusB family.

Functionally, involved in transcription antitermination. Required for transcription of ribosomal RNA (rRNA) genes. Binds specifically to the boxA antiterminator sequence of the ribosomal RNA (rrn) operons. The sequence is that of Transcription antitermination protein NusB from Desulforapulum autotrophicum (strain ATCC 43914 / DSM 3382 / VKM B-1955 / HRM2) (Desulfobacterium autotrophicum).